We begin with the raw amino-acid sequence, 115 residues long: Holo-[acyl-carrier-protein] synthase (115 aa).

Residues aspartate 8 and glutamate 50 each contribute to the Mg(2+) site.

This sequence belongs to the P-Pant transferase superfamily. AcpS family. Requires Mg(2+) as cofactor.

It is found in the cytoplasm. It catalyses the reaction apo-[ACP] + CoA = holo-[ACP] + adenosine 3',5'-bisphosphate + H(+). Transfers the 4'-phosphopantetheine moiety from coenzyme A to a Ser of acyl-carrier-protein. In Renibacterium salmoninarum (strain ATCC 33209 / DSM 20767 / JCM 11484 / NBRC 15589 / NCIMB 2235), this protein is Holo-[acyl-carrier-protein] synthase.